The primary structure comprises 434 residues: Probable phosphoglucosamine mutase (434 aa).

Catalysis depends on serine 91, which acts as the Phosphoserine intermediate. Residues serine 91, aspartate 229, aspartate 231, and aspartate 233 each contribute to the Mg(2+) site. Serine 91 carries the post-translational modification Phosphoserine.

Belongs to the phosphohexose mutase family. It depends on Mg(2+) as a cofactor. Post-translationally, activated by phosphorylation.

The enzyme catalyses alpha-D-glucosamine 1-phosphate = D-glucosamine 6-phosphate. In terms of biological role, catalyzes the conversion of glucosamine-6-phosphate to glucosamine-1-phosphate. This chain is Probable phosphoglucosamine mutase, found in Methanosarcina barkeri (strain Fusaro / DSM 804).